We begin with the raw amino-acid sequence, 25 residues long: Panurgine K (25 aa).

2 disulfide bridges follow: Cys8–Cys23 and Cys11–Cys19.

The protein resides in the target cell membrane. It localises to the secreted. Antimicrobial peptide active against Gram-positive bacteria M.luteus (MIC=1.6 uM) and B.subtilis (MIC=3.3 uM). Less active against Gram-negative bacteria E.coli (MIC=63.3 uM) and yeast C.albicans (MIC=24.2 uM). Not active against S.aureus and P.aeruginosa. Has no hemolytic activity against human erythrocytes. Probably acts by disrupting membranes of target cells. This Panurgus calcaratus (Solitary bee) protein is Panurgine K.